Reading from the N-terminus, the 208-residue chain is Cysteine-rich protein 2 (208 aa).

Residues 5 to 57 (CPKCDKTVYFAEKVSSLGKDWHKFCLKCERCNKTLTPGGHAEHDGKPFCHKPC) enclose the LIM zinc-binding 1 domain. Lysine 23 bears the N6-acetyllysine mark. Position 104 is a phosphoserine (serine 104). Residues 126 to 178 (CPRCNKRVYFAEKVTSLGKDWHRPCLRCERCSKTLTPGGHAEHDGQPYCHKPC) form the LIM zinc-binding 2 domain. N6-acetyllysine occurs at positions 138 and 144.

In terms of assembly, interacts with TGFB1I1.

This Mus musculus (Mouse) protein is Cysteine-rich protein 2 (Crip2).